An 84-amino-acid polypeptide reads, in one-letter code: uncharacterized protein (84 aa).

An LITAF domain is found at 1 to 83 (MDDKFTTLPC…CKQAVFVYKI (83 aa)). Cys21 and Cys24 together coordinate Zn(2+). The membrane-binding amphipathic helix stretch occupies residues 39–61 (MSWVVCTAITLACLPCCCIPFLC). Cys71 and Cys74 together coordinate Zn(2+).

It is found in the host membrane. This is an uncharacterized protein from Dryophytes versicolor (chameleon treefrog).